We begin with the raw amino-acid sequence, 407 residues long: MAYQEPNKDGFYGKFGGRFVPETLMTAVLELEKAYRESQADPSFQEELNQLLRQYVGRETPLYYAKNLTQHIGGAKIYLKREDLNHTGAHKINNALGQVWLAKRMGKKKIIAETGAGQHGVATATAAALFNMECTIYMGEEDVKRQALNVFRMELLGAKVEAVTDGSRVLKDAVNAALRSWVANIDDTHYILGSALGPHPFPEIVRDFQSVIGREAKQQYRDMTGQNLPDALVACVGGGSNAIGLFHPFVEDESVAMYGTEAAGLGVDTEHHAATLTKGRPGVLHGSLMDVLQDAHGQILEAFSISAGLDYPGIGPEHSHYHDIKRASYVPVTDEEALEGFQLLSRVEGIIPALESSHAIAFAVKLAKELGPEKSMIVCLSGRGDKDVVQVKDRLEADAAKKGEAHA.

The residue at position 91 (lysine 91) is an N6-(pyridoxal phosphate)lysine.

This sequence belongs to the TrpB family. In terms of assembly, tetramer of two alpha and two beta chains. Requires pyridoxal 5'-phosphate as cofactor.

The enzyme catalyses (1S,2R)-1-C-(indol-3-yl)glycerol 3-phosphate + L-serine = D-glyceraldehyde 3-phosphate + L-tryptophan + H2O. Its pathway is amino-acid biosynthesis; L-tryptophan biosynthesis; L-tryptophan from chorismate: step 5/5. The beta subunit is responsible for the synthesis of L-tryptophan from indole and L-serine. This Streptococcus pneumoniae (strain Hungary19A-6) protein is Tryptophan synthase beta chain.